The primary structure comprises 559 residues: Potassium-transporting ATPase potassium-binding subunit (559 aa).

13 helical membrane-spanning segments follow: residues 5 to 25 (GFLL…PLGS), 27 to 47 (LARL…RILW), 63 to 83 (LLAL…LLFW), 132 to 152 (GLTV…FALI), 170 to 190 (LVRI…LFFI), 253 to 273 (LAQM…FGEA), 283 to 303 (LLWA…WAEV), 327 to 347 (FGVL…CGAV), 356 to 376 (ALGG…FGGV), 379 to 399 (GLYG…LMIG), 416 to 436 (MTAL…ALAM), 484 to 504 (LLAF…MAIA), and 524 to 544 (GALF…LTFI).

The protein belongs to the KdpA family. As to quaternary structure, the system is composed of three essential subunits: KdpA, KdpB and KdpC.

It localises to the cell inner membrane. Functionally, part of the high-affinity ATP-driven potassium transport (or Kdp) system, which catalyzes the hydrolysis of ATP coupled with the electrogenic transport of potassium into the cytoplasm. This subunit binds the periplasmic potassium ions and delivers the ions to the membrane domain of KdpB through an intramembrane tunnel. This is Potassium-transporting ATPase potassium-binding subunit from Salmonella choleraesuis (strain SC-B67).